Here is a 231-residue protein sequence, read N- to C-terminus: Somatolactin-2 (231 aa).

A signal peptide spans 1-24 (MRMMRAIKQGQWAILLWPYLLTTS). 3 disulfide bridges follow: Cys-29/Cys-39, Cys-89/Cys-205, and Cys-222/Cys-230. Asn-145 is a glycosylation site (N-linked (GlcNAc...) asparagine).

It belongs to the somatotropin/prolactin family. Pituitary gland.

The protein localises to the secreted. This Sparus aurata (Gilthead sea bream) protein is Somatolactin-2.